Reading from the N-terminus, the 380-residue chain is Cytochrome b (380 aa).

The next 4 membrane-spanning stretches (helical) occupy residues 33–53, 77–98, 113–133, and 178–198; these read FGSL…FLAM, WLIR…FLHV, WNMG…GYVL, and FFAF…VHLL. Heme b is bound by residues His-83 and His-97. Heme b-binding residues include His-182 and His-196. An a ubiquinone-binding site is contributed by His-201. The next 4 helical transmembrane spans lie at 226-246, 288-308, 320-340, and 347-367; these read IKDF…TLFF, LGGV…PLLH, ITQT…WIGG, and FIII…ILMP.

This sequence belongs to the cytochrome b family. The cytochrome bc1 complex contains 11 subunits: 3 respiratory subunits (MT-CYB, CYC1 and UQCRFS1), 2 core proteins (UQCRC1 and UQCRC2) and 6 low-molecular weight proteins (UQCRH/QCR6, UQCRB/QCR7, UQCRQ/QCR8, UQCR10/QCR9, UQCR11/QCR10 and a cleavage product of UQCRFS1). This cytochrome bc1 complex then forms a dimer. Requires heme b as cofactor.

The protein resides in the mitochondrion inner membrane. Component of the ubiquinol-cytochrome c reductase complex (complex III or cytochrome b-c1 complex) that is part of the mitochondrial respiratory chain. The b-c1 complex mediates electron transfer from ubiquinol to cytochrome c. Contributes to the generation of a proton gradient across the mitochondrial membrane that is then used for ATP synthesis. The chain is Cytochrome b (MT-CYB) from Microtus guentheri (Gunther's vole).